Consider the following 229-residue polypeptide: Large ribosomal subunit protein uL1 (229 aa).

It belongs to the universal ribosomal protein uL1 family. In terms of assembly, part of the 50S ribosomal subunit.

Its function is as follows. Binds directly to 23S rRNA. The L1 stalk is quite mobile in the ribosome, and is involved in E site tRNA release. Protein L1 is also a translational repressor protein, it controls the translation of the L11 operon by binding to its mRNA. The polypeptide is Large ribosomal subunit protein uL1 (Haemophilus ducreyi (strain 35000HP / ATCC 700724)).